A 61-amino-acid polypeptide reads, in one-letter code: Large ribosomal subunit protein bL28 (61 aa).

The protein belongs to the bacterial ribosomal protein bL28 family.

This is Large ribosomal subunit protein bL28 from Geobacillus kaustophilus (strain HTA426).